We begin with the raw amino-acid sequence, 182 residues long: Testis-expressed protein 29 (182 aa).

Over 1–56 (MRYTTDIKKSPPQLLKTFAVCDISLYDICDYNVTRDQCKELGCCFYKGVCYKKVVP) the chain is Extracellular. A helical membrane pass occupies residues 57–77 (IYVQMFSTLIVLVTGIIIITI). Over 78 to 182 (IYRIVQEIKR…PPTDPSENPP (105 aa)) the chain is Cytoplasmic. Positions 91–182 (LSMNSTPKAS…PPTDPSENPP (92 aa)) are disordered. The segment covering 115-170 (RAPSRSPSRTSSTLSSRSPTTAPTTAPTTDPATDPATDPATDPATDPATDPATDPA) has biased composition (low complexity). Residues 171–182 (TAPPTDPSENPP) show a composition bias toward pro residues.

The protein resides in the membrane. This is Testis-expressed protein 29 (Tex29) from Rattus norvegicus (Rat).